Consider the following 193-residue polypeptide: NAD(P)H-quinone oxidoreductase subunit I (193 aa).

4Fe-4S ferredoxin-type domains are found at residues 55 to 84 and 95 to 124; these read GRIHFEFDKCISCEVCVRVCPINLPVVDWE and KHYSIDFGVCIFCANCVEYCPTNCLSVTEE. [4Fe-4S] cluster is bound by residues C64, C67, C70, C74, C104, C107, C110, and C114.

It belongs to the complex I 23 kDa subunit family. In terms of assembly, NDH-1 is composed of at least 11 different subunits. Requires [4Fe-4S] cluster as cofactor.

The protein resides in the cellular thylakoid membrane. The catalysed reaction is a plastoquinone + NADH + (n+1) H(+)(in) = a plastoquinol + NAD(+) + n H(+)(out). It carries out the reaction a plastoquinone + NADPH + (n+1) H(+)(in) = a plastoquinol + NADP(+) + n H(+)(out). Functionally, NDH-1 shuttles electrons from an unknown electron donor, via FMN and iron-sulfur (Fe-S) centers, to quinones in the respiratory and/or the photosynthetic chain. The immediate electron acceptor for the enzyme in this species is believed to be plastoquinone. Couples the redox reaction to proton translocation, and thus conserves the redox energy in a proton gradient. The sequence is that of NAD(P)H-quinone oxidoreductase subunit I from Cyanothece sp. (strain PCC 7425 / ATCC 29141).